The chain runs to 594 residues: Invasin CotH2 (594 aa).

Positions 1–19 (MKLSLTIVSSSFLVAIAHA) are cleaved as a signal peptide. Residues N77, N162, N226, N316, N441, N519, and N533 are each glycosylated (N-linked (GlcNAc...) asparagine). Residues 529–565 (PPAANGTATSTNDGGNTHTAAGESKPASSSESSGSKI) are disordered. The segment covering 534–547 (GTATSTNDGGNTHT) has biased composition (polar residues). The span at 548–565 (AAGESKPASSSESSGSKI) shows a compositional bias: low complexity. S571 carries the GPI-anchor amidated serine lipid modification. Residues 572 to 594 (GASRSAVSTVLLGVTALVATAIF) constitute a propeptide, removed in mature form.

Interacts with host epithelial cell surface HSPA5/BiP protein.

The protein localises to the cell membrane. Functionally, promotes invasion of host epithelial cells by adhering to receptors on the host cell surface to facilitate endocytosis of the pathogen into host cells. Binds HSPA5/BiP protein on the cell surface of host epithelial cells. The protein is Invasin CotH2 of Rhizopus delemar (strain RA 99-880 / ATCC MYA-4621 / FGSC 9543 / NRRL 43880) (Mucormycosis agent).